Reading from the N-terminus, the 647-residue chain is A-type voltage-gated potassium channel KCND1 (647 aa).

Residues 1-183 (MAAGVATWLP…RAFENPHTST (183 aa)) are Cytoplasmic-facing. Residues 2 to 20 (AAGVATWLPFARAAAVGWL) form an interaction with KCNIP1, KCNIP2, and other family members region. Residues H104, C131, and C132 each contribute to the Zn(2+) site. The tract at residues 144–164 (AQRLAEDEEAEQTGDGPALPA) is disordered. The helical transmembrane segment at 184-205 (AALVFYYVTGFFIAVSVIANVV) threads the bilayer. Over 206-230 (ETIPCRGPARRPPREQPCGDRFPLA) the chain is Extracellular. The chain crosses the membrane as a helical span at residues 231 to 252 (FFCMDTACVLIFTGEYLLRLFA). Residues 253 to 263 (APSRCRFLRSV) are Cytoplasmic-facing. The helical transmembrane segment at 264–284 (MSLIDVVAILPYYIGLLVPKN) threads the bilayer. Residues 285 to 287 (EDV) are Extracellular-facing. Residues 288 to 308 (SGAFVTLRVFRVFRIFKFSRH) form a helical; Voltage-sensor membrane-spanning segment. Topologically, residues 309-323 (SQGLRILGYTLKSCA) are cytoplasmic. Residues 310–323 (QGLRILGYTLKSCA) are S4-S5 linker. Residues 324–345 (SELGFLLFSLTMAIIIFATVMF) traverse the membrane as a helical segment. At 346-359 (YAEKGTSKTNFTSI) the chain is on the extracellular side. Positions 360–371 (PAAFWYTIVTMT) form an intramembrane region, helical. The Selectivity filter motif lies at 372 to 377 (TLGYGD). An intramembrane segment occupies 372–379 (TLGYGDMV). At 380-386 (PSTIAGK) the chain is on the extracellular side. Residues 387-415 (IFGSICSLSGVLVIALPVPVIVSNFSRIY) traverse the membrane as a helical segment. The Cytoplasmic segment spans residues 416-647 (HQNQRADKRR…LPETVKISSL (232 aa)). A required for dendritic targeting region spans residues 474–489 (FEQQHHHLLHCLEKTT). A compositionally biased stretch (low complexity) spans 510 to 520 (GRTSRSTSVSS). The segment at 510–531 (GRTSRSTSVSSQPVGPSSLLSS) is disordered. The span at 521-530 (QPVGPSSLLS) shows a compositional bias: polar residues. At S555 the chain carries Phosphoserine. 2 disordered regions span residues 564–584 (GLRRSPGPQSRSSLNAKPHDS) and 601–634 (IPTPPANTPDESQPSSPGGGGRASSTLRNSRLGT).

Belongs to the potassium channel family. D (Shal) (TC 1.A.1.2) subfamily. Kv4.1/KCND1 sub-subfamily. Component of heteromultimeric potassium channels. Identified in potassium channel complexes containing KCND1, KCND2, KCND3, KCNIP1, KCNIP2, KCNIP3, KCNIP4, DPP6 and DPP10. As to expression, detected in carotid body chemoreceptor cells and in frontal cortex.

The protein localises to the cell membrane. It carries out the reaction K(+)(in) = K(+)(out). Functionally, A-type voltage-gated potassium channel that mediates transmembrane potassium transport in excitable membranes in the brain. Mediates A-type current I(SA) in suprachiasmatic nucleus (SCN) neurons. Exhibits a low-threshold A-type current with a hyperpolarized steady-state inactivation midpoint and the recovery process was steeply voltage-dependent, with recovery being markedly faster at more negative potentials. May regulates repetitive firing rates in the suprachiasmatic nucleus (SCN) neurons and circadian rhythms in neuronal excitability and behavior. Contributes to the regulation of the circadian rhythm of action potential firing in suprachiasmatic nucleus neurons, which regulates the circadian rhythm of locomotor activity. The regulatory subunit KCNIP1 modulates the kinetics of channel inactivation, increases the current amplitudes and accelerates recovery from inactivation, shifts activation in a depolarizing direction. The regulatory subunit DPP10 decreases the voltage sensitivity of the inactivation channel gating. This is A-type voltage-gated potassium channel KCND1 from Oryctolagus cuniculus (Rabbit).